Here is a 687-residue protein sequence, read N- to C-terminus: Putative secreted metallopeptidase (687 aa).

The N-terminal stretch at 1 to 22 is a signal peptide; sequence MLFTSTAVAALSGALLIQPALA. N-linked (GlcNAc...) asparagine glycosylation is found at Asn-54, Asn-114, Asn-252, Asn-256, and Asn-379.

The protein belongs to the peptidase M10B family.

Its subcellular location is the secreted. The sequence is that of Putative secreted metallopeptidase from Arthroderma benhamiae (strain ATCC MYA-4681 / CBS 112371) (Trichophyton mentagrophytes).